Reading from the N-terminus, the 588-residue chain is Glutamyl-tRNA(Gln) amidotransferase subunit B, mitochondrial (588 aa).

The N-terminal 109 residues, 1–109 (MLRSWIGSGT…RAPTSTSETP (109 aa)), are a transit peptide targeting the mitochondrion. Low complexity predominate over residues 22–35 (SSLPSPKASFSSAP). A disordered region spans residues 22–50 (SSLPSPKASFSSAPNRYLQPPTSADRVPL).

The protein belongs to the GatB/GatE family. GatB subfamily. Subunit of the heterotrimeric GatCAB amidotransferase (AdT) complex, composed of A, B and C subunits.

Its subcellular location is the mitochondrion. The catalysed reaction is L-glutamyl-tRNA(Gln) + L-glutamine + ATP + H2O = L-glutaminyl-tRNA(Gln) + L-glutamate + ADP + phosphate + H(+). Functionally, allows the formation of correctly charged Gln-tRNA(Gln) through the transamidation of misacylated Glu-tRNA(Gln) in the mitochondria. The reaction takes place in the presence of glutamine and ATP through an activated gamma-phospho-Glu-tRNA(Gln). This is Glutamyl-tRNA(Gln) amidotransferase subunit B, mitochondrial from Penicillium rubens (strain ATCC 28089 / DSM 1075 / NRRL 1951 / Wisconsin 54-1255) (Penicillium chrysogenum).